The sequence spans 165 residues: MSGTHKKLGARHKARKRAVDFLFEAEARDLDPVALASERSDLSVKDDAVAPVAAYTVTLVSGVAENLDRIDQVISSHLQDWTLERLPAVDRAILRIAVWELFHATDVPPVVAVDEAVELAKQLSTDDSPGFVNGILGQVVLVAPQVRSAAAATSQRAQESDSGTE.

It belongs to the NusB family.

Its function is as follows. Involved in transcription antitermination. Required for transcription of ribosomal RNA (rRNA) genes. Binds specifically to the boxA antiterminator sequence of the ribosomal RNA (rrn) operons. The chain is Transcription antitermination protein NusB from Rhodococcus erythropolis (strain PR4 / NBRC 100887).